We begin with the raw amino-acid sequence, 158 residues long: MFNWNNRKVAKIITLIIFVAWLFVLILIAVVVLTKGNNLDILFGWMLPLPFAVLNSLSVLRLASFFASLKNVKKQKAVSFFAFFFTARYLIYLIPVIISFVVTPSIFNTIATIISTLFFPILNLVLSFVWLPLEYFFINLISKSKRKHVATGDSFKRN.

4 consecutive transmembrane segments (helical) span residues 12–32, 39–59, 90–110, and 113–133; these read IITL…AVVV, LDIL…SLSV, LIYL…FNTI, and IIST…WLPL.

It is found in the cell membrane. This is an uncharacterized protein from Mycoplasma genitalium (strain ATCC 33530 / DSM 19775 / NCTC 10195 / G37) (Mycoplasmoides genitalium).